Reading from the N-terminus, the 166-residue chain is Protein FAM89A (166 aa).

The protein belongs to the FAM89 family.

The polypeptide is Protein FAM89A (fam89a) (Xenopus laevis (African clawed frog)).